Consider the following 176-residue polypeptide: Peptide methionine sulfoxide reductase MsrA (176 aa).

The active site involves C10.

The protein belongs to the MsrA Met sulfoxide reductase family.

It carries out the reaction L-methionyl-[protein] + [thioredoxin]-disulfide + H2O = L-methionyl-(S)-S-oxide-[protein] + [thioredoxin]-dithiol. The enzyme catalyses [thioredoxin]-disulfide + L-methionine + H2O = L-methionine (S)-S-oxide + [thioredoxin]-dithiol. Has an important function as a repair enzyme for proteins that have been inactivated by oxidation. Catalyzes the reversible oxidation-reduction of methionine sulfoxide in proteins to methionine. This Leptospira borgpetersenii serovar Hardjo-bovis (strain JB197) protein is Peptide methionine sulfoxide reductase MsrA.